The following is a 236-amino-acid chain: Small ribosomal subunit protein uS3 (236 aa).

Positions 39–107 constitute a KH type-2 domain; that stretch reads VRQFLTKELK…PAQINISEVR (69 aa).

It belongs to the universal ribosomal protein uS3 family. Part of the 30S ribosomal subunit. Forms a tight complex with proteins S10 and S14.

Functionally, binds the lower part of the 30S subunit head. Binds mRNA in the 70S ribosome, positioning it for translation. This chain is Small ribosomal subunit protein uS3, found in Aeromonas salmonicida (strain A449).